The sequence spans 100 residues: MAKKGMLEREKKRQNLVYKYNSRRQALKNSIKYSSSFSETSLLKKELEKLPLNSMKIRLRNRCFVTGKPRGFYRNFGLSRNMLRYMGHECLIPGLMKASW.

The protein belongs to the universal ribosomal protein uS14 family. As to quaternary structure, part of the 30S ribosomal subunit.

It localises to the plastid. It is found in the chloroplast. Functionally, binds 16S rRNA, required for the assembly of 30S particles. The polypeptide is Small ribosomal subunit protein uS14c (Bigelowiella natans (Pedinomonas minutissima)).